A 305-amino-acid polypeptide reads, in one-letter code: Probable lipid kinase YegS-like (305 aa).

One can recognise a DAGKc domain in the interval 1 to 129 (MSERKALLIL…IDLGEVGGQI (129 aa)). ATP is bound by residues Thr-39, 65-71 (GDGTLRD), and Thr-92. Residues Leu-210, Asp-213, and Leu-215 each coordinate Mg(2+). Catalysis depends on Glu-268, which acts as the Proton acceptor.

The protein belongs to the diacylglycerol/lipid kinase family. YegS lipid kinase subfamily. Mg(2+) serves as cofactor. Ca(2+) is required as a cofactor.

It localises to the cytoplasm. Functionally, probably phosphorylates lipids; the in vivo substrate is unknown. This chain is Probable lipid kinase YegS-like, found in Pseudomonas fluorescens (strain Pf0-1).